Here is a 187-residue protein sequence, read N- to C-terminus: UPF0301 protein YPO0936/y3322/YP_3506 (187 aa).

This sequence belongs to the UPF0301 (AlgH) family.

This chain is UPF0301 protein YPO0936/y3322/YP_3506, found in Yersinia pestis.